The following is a 174-amino-acid chain: Large ribosomal subunit protein bL12cz (174 aa).

The N-terminal 45 residues, M1 to T45, are a transit peptide targeting the chloroplast. Residues M1 to A46 form a disordered region. The span at S7 to S18 shows a compositional bias: low complexity. Pro residues predominate over residues S19–T29.

Belongs to the bacterial ribosomal protein bL12 family.

The protein resides in the plastid. Its subcellular location is the chloroplast. The chain is Large ribosomal subunit protein bL12cz (RPL12-1) from Secale cereale (Rye).